A 95-amino-acid chain; its full sequence is Small integral membrane protein 26 (95 aa).

The helical transmembrane segment at methionine 13 to methionine 35 threads the bilayer.

This sequence belongs to the SMIM26 family. As to quaternary structure, interacts with AGK and SLC25A11. Detected in kidney (at protein level).

The protein localises to the mitochondrion outer membrane. Its function is as follows. May play a role in cell viability. This chain is Small integral membrane protein 26, found in Homo sapiens (Human).